The sequence spans 193 residues: dTTP/UTP pyrophosphatase (193 aa).

Asp71 acts as the Proton acceptor in catalysis.

The protein belongs to the Maf family. YhdE subfamily. It depends on a divalent metal cation as a cofactor.

Its subcellular location is the cytoplasm. It carries out the reaction dTTP + H2O = dTMP + diphosphate + H(+). The enzyme catalyses UTP + H2O = UMP + diphosphate + H(+). In terms of biological role, nucleoside triphosphate pyrophosphatase that hydrolyzes dTTP and UTP. May have a dual role in cell division arrest and in preventing the incorporation of modified nucleotides into cellular nucleic acids. The polypeptide is dTTP/UTP pyrophosphatase (Geobacter sp. (strain M21)).